A 1466-amino-acid polypeptide reads, in one-letter code: Retrovirus-related Pol polyprotein from transposon RE1 (1466 aa).

Residues 227 to 270 form a disordered region; it reads SHRNTTTTNNNNNGNRNNRYDNRNNNNNSKPWQQSSTNFHPNNN. Residues 229 to 254 show a composition bias toward low complexity; sequence RNTTTTNNNNNGNRNNRYDNRNNNNN. Positions 255–270 are enriched in polar residues; it reads SKPWQQSSTNFHPNNN. A CCHC-type zinc finger spans residues 278 to 294; it reads KCQICGVQGHSAKRCSQ. Catalysis depends on Asp334, which acts as the For protease activity. The Integrase catalytic domain maps to 519–682; sequence NSTRPLEYIY…SPFQKLFGTS (164 aa). Mg(2+)-binding residues include Asp530 and Asp592. The segment at 772–927 is disordered; it reads WSPHTTLPTR…NNNQAPLNTH (156 aa). Composition is skewed to low complexity over residues 796–827 and 836–898; these read AATP…SFPS and QNGP…SSTS. The span at 899-912 shows a compositional bias: pro residues; that stretch reads PTPPSILIHPPPPL. Over residues 915-927 the composition is skewed to polar residues; sequence IVNNNNQAPLNTH. In terms of domain architecture, Reverse transcriptase Ty1/copia-type spans 982–1225; sequence NHTWDLVPPP…ITAKPVTTPM (244 aa).

It catalyses the reaction DNA(n) + a 2'-deoxyribonucleoside 5'-triphosphate = DNA(n+1) + diphosphate. This Arabidopsis thaliana (Mouse-ear cress) protein is Retrovirus-related Pol polyprotein from transposon RE1 (RE1).